The following is a 496-amino-acid chain: MLLNQQLVQQFVTQAIAFGDYEQEDNIYIQNQLLRILNAIGIDVDNESPLNQDATANAIAQYWIEQAVNENYLEDALYKKEIVEAQILDLITPRPSVINRNFVEAYKKSPETATNYFYEITKRNHYVKEDAIANNINYEVETEYGDIEITINLSKPEKDAKQIAKAKAEPAKHYPKCALCIENEGYQGSVTQAARTNHRIIRLKLDGKSWGFQYSPYAYFPEHSIVLSEHHVPMEINKQTFVNLLAFIEQFPHYFIGSNADIPLVGGSILSHNHYQAGKHVFPMDNAAEIERFTMNQFSSVTASTLNWPMSVIRLKSENRDELINAATYVMNTWNQYSDETIDVRAFSKDGERHHTVTPIARYRQSQYELDIVLRDNQTSEVFPDGIFHPHEDVQHIKKENIGLIEVMGTAILPGRLKEELQQVKTYLVGDNQFDLGIHQQWAENMKRTYDINKQNVDDIVDKEVGYKFKRVLEDAGVFKNTDTGRQAFKRFIKHL.

Belongs to the galactose-1-phosphate uridylyltransferase type 2 family.

It localises to the cytoplasm. The enzyme catalyses alpha-D-galactose 1-phosphate + UDP-alpha-D-glucose = alpha-D-glucose 1-phosphate + UDP-alpha-D-galactose. The protein operates within carbohydrate metabolism; galactose metabolism. The sequence is that of Galactose-1-phosphate uridylyltransferase from Staphylococcus saprophyticus subsp. saprophyticus (strain ATCC 15305 / DSM 20229 / NCIMB 8711 / NCTC 7292 / S-41).